The chain runs to 733 residues: Putative cyclic nucleotide-gated ion channel 9 (733 aa).

The Cytoplasmic portion of the chain corresponds to 1–117 (MLDCGKKAVK…DKFLLLCNKL (117 aa)). The helical transmembrane segment at 118–138 (FVTSCILAVSVDPLFLYLPFV) threads the bilayer. Over 139–151 (KDNEKCIGIDRKL) the chain is Extracellular. Residues 152 to 172 (AIIATTLRTVIDAFYLFHMAL) form a helical membrane-spanning segment. Residues 173–207 (RFRTAFVAPSSRVFGRGELVIDPAQIAKRYLQQYF) lie on the Cytoplasmic side of the membrane. Residues 208 to 228 (IIDFLSVLPLPQIVVWRFLYI) form a helical membrane-spanning segment. Residues 229–239 (SKGASVLATKR) lie on the Extracellular side of the membrane. Residues 240–260 (ALRSIILVQYIPRFIRLYPLS) traverse the membrane as a helical segment. Over 261–280 (SELKRTAGVFAETAWAGAAY) the chain is Cytoplasmic. The chain crosses the membrane as a helical span at residues 281–301 (YLLLYMLASHIVGAIWYLLAL). Topologically, residues 302 to 406 (ERYNGCWTKV…GQGLETSTYP (105 aa)) are extracellular. The chain crosses the membrane as a helical span at residues 407-427 (GEVIFSIALAIAGLLLFALLI). The Cytoplasmic portion of the chain corresponds to 428-733 (GNMQTYLQSL…EPDFSADDTS (306 aa)). A nucleoside 3',5'-cyclic phosphate is bound by residues 513-637 (LFEN…SRQV) and Glu584. The tract at residues 629–644 (FRRLHSRQVQHTFRFY) is calmodulin-binding. The IQ domain occupies 649–678 (RTWAAIFIQAAWRRYVKKKKLEQLRKEEEE).

The protein belongs to the cyclic nucleotide-gated cation channel (TC 1.A.1.5) family. Homotetramer or heterotetramer.

The protein localises to the cell membrane. Putative cyclic nucleotide-gated ion channel. The sequence is that of Putative cyclic nucleotide-gated ion channel 9 (CNGC9) from Arabidopsis thaliana (Mouse-ear cress).